Here is a 1339-residue protein sequence, read N- to C-terminus: Aldehyde oxidase 1 (1339 aa).

One can recognise a 2Fe-2S ferredoxin-type domain in the interval 5–92; it reads SELLFYVNGR…GAAVTTVEGI (88 aa). [2Fe-2S] cluster-binding residues include cysteine 44, cysteine 49, cysteine 52, and cysteine 74. Residue glutamine 113 coordinates Mo-molybdopterin. Residues cysteine 114, cysteine 117, cysteine 149, and cysteine 151 each contribute to the [2Fe-2S] cluster site. Position 151 (cysteine 151) interacts with Mo-molybdopterin. An FAD-binding PCMH-type domain is found at 236–421; that stretch reads FGSDRMTWIS…ISVNIPYSRK (186 aa). FAD is bound by residues 264–271, alanine 345, serine 354, histidine 358, aspartate 367, and leucine 411; that span reads VVMGNTSV. Mo-molybdopterin is bound by residues 807 to 808 and methionine 1048; that span reads AF. The residue at position 1069 (serine 1069) is a Phosphoserine. Residues 1089-1092, glutamine 1204, and leucine 1269 contribute to the Mo-molybdopterin site; that span reads GSVV. The active-site Proton acceptor; for azaheterocycle hydroxylase activity is glutamate 1271.

The protein belongs to the xanthine dehydrogenase family. In terms of assembly, homodimer. [2Fe-2S] cluster is required as a cofactor. The cofactor is FAD. Requires Mo-molybdopterin as cofactor. Post-translationally, the N-terminus is blocked. In terms of tissue distribution, expressed at high levels in liver, lung and spleen. Also expressed in kindey, eye, testis, duodenum, esophagus and thymus (at protein level).

The protein resides in the cytoplasm. The enzyme catalyses an aldehyde + O2 + H2O = a carboxylate + H2O2 + H(+). The catalysed reaction is retinal + O2 + H2O = retinoate + H2O2 + H(+). Its function is as follows. Oxidase with broad substrate specificity, oxidizing aromatic azaheterocycles, such as N1-methylnicotinamide, N-methylphthalazinium and phthalazine, as well as aldehydes, such as benzaldehyde, retinal, pyridoxal, and vanillin. Plays a key role in the metabolism of xenobiotics and drugs containing aromatic azaheterocyclic substituents. Is probably involved in the regulation of reactive oxygen species homeostasis. May be a prominent source of superoxide generation via the one-electron reduction of molecular oxygen. May also catalyze nitric oxide (NO) production via the reduction of nitrite to NO with NADH or aldehyde as electron donor. May play a role in adipogenesis. In Bos taurus (Bovine), this protein is Aldehyde oxidase 1.